Here is a 491-residue protein sequence, read N- to C-terminus: Probable cytosol aminopeptidase (491 aa).

Residues Lys263 and Asp268 each coordinate Mn(2+). Lys275 is an active-site residue. Mn(2+) is bound by residues Asp286, Asp345, and Glu347. Arg349 is an active-site residue.

It belongs to the peptidase M17 family. Requires Mn(2+) as cofactor.

Its subcellular location is the cytoplasm. It carries out the reaction Release of an N-terminal amino acid, Xaa-|-Yaa-, in which Xaa is preferably Leu, but may be other amino acids including Pro although not Arg or Lys, and Yaa may be Pro. Amino acid amides and methyl esters are also readily hydrolyzed, but rates on arylamides are exceedingly low.. The enzyme catalyses Release of an N-terminal amino acid, preferentially leucine, but not glutamic or aspartic acids.. Presumably involved in the processing and regular turnover of intracellular proteins. Catalyzes the removal of unsubstituted N-terminal amino acids from various peptides. The polypeptide is Probable cytosol aminopeptidase (Haemophilus influenzae (strain PittGG)).